Reading from the N-terminus, the 242-residue chain is Proteasome subunit alpha (242 aa).

This sequence belongs to the peptidase T1A family. The 20S proteasome core is composed of 14 alpha and 14 beta subunits that assemble into four stacked heptameric rings, resulting in a barrel-shaped structure. The two inner rings, each composed of seven catalytic beta subunits, are sandwiched by two outer rings, each composed of seven alpha subunits. The catalytic chamber with the active sites is on the inside of the barrel. Has a gated structure, the ends of the cylinder being occluded by the N-termini of the alpha-subunits. Is capped at one or both ends by the proteasome regulatory ATPase, PAN.

Its subcellular location is the cytoplasm. The formation of the proteasomal ATPase PAN-20S proteasome complex, via the docking of the C-termini of PAN into the intersubunit pockets in the alpha-rings, triggers opening of the gate for substrate entry. Interconversion between the open-gate and close-gate conformations leads to a dynamic regulation of the 20S proteasome proteolysis activity. Its function is as follows. Component of the proteasome core, a large protease complex with broad specificity involved in protein degradation. This Sulfolobus acidocaldarius (strain ATCC 33909 / DSM 639 / JCM 8929 / NBRC 15157 / NCIMB 11770) protein is Proteasome subunit alpha.